Consider the following 215-residue polypeptide: Protein LURP-one-related 16 (215 aa).

Residue G2 is the site of N-myristoyl glycine attachment.

Belongs to the LOR family.

Might be related to the phospholipid scramblase and tubby-like superfamily of membrane tethered transcription factors. This chain is Protein LURP-one-related 16, found in Arabidopsis thaliana (Mouse-ear cress).